A 145-amino-acid polypeptide reads, in one-letter code: Endoribonuclease YbeY (145 aa).

The Zn(2+) site is built by His109, His113, and His119.

Belongs to the endoribonuclease YbeY family. The cofactor is Zn(2+).

Its subcellular location is the cytoplasm. Single strand-specific metallo-endoribonuclease involved in late-stage 70S ribosome quality control and in maturation of the 3' terminus of the 16S rRNA. This chain is Endoribonuclease YbeY, found in Ruthia magnifica subsp. Calyptogena magnifica.